The following is a 217-amino-acid chain: Cytidylate kinase (217 aa).

ATP is bound at residue 10 to 18 (GPAGAGKST).

The protein belongs to the cytidylate kinase family. Type 1 subfamily.

The protein localises to the cytoplasm. It catalyses the reaction CMP + ATP = CDP + ADP. The enzyme catalyses dCMP + ATP = dCDP + ADP. The polypeptide is Cytidylate kinase (Alkaliphilus oremlandii (strain OhILAs) (Clostridium oremlandii (strain OhILAs))).